The primary structure comprises 205 residues: MADYTTIAAQPRNEFGKGFARRLRVAGQVPGVIYGVDVEAPIHFSINRLELHAVLRAHGVNAIIELDIEGEKHLTMIKHVDQNVLTLNADHVDLLAIKRGEKVEVEVPVVLTGETAPGTTLVQDADVVLVEADVLSIPEEITFSVEGLDVDSKVLAGDLAMPANTSLVADAETVIASVNHEEVAEEAEETEGEDAEEAPAAEGEE.

The tract at residues 180-205 is disordered; it reads HEEVAEEAEETEGEDAEEAPAAEGEE. Residues 183–205 show a composition bias toward acidic residues; it reads VAEEAEETEGEDAEEAPAAEGEE.

It belongs to the bacterial ribosomal protein bL25 family. CTC subfamily. As to quaternary structure, part of the 50S ribosomal subunit; part of the 5S rRNA/L5/L18/L25 subcomplex. Contacts the 5S rRNA. Binds to the 5S rRNA independently of L5 and L18.

Functionally, this is one of the proteins that binds to the 5S RNA in the ribosome where it forms part of the central protuberance. The chain is Large ribosomal subunit protein bL25 from Corynebacterium diphtheriae (strain ATCC 700971 / NCTC 13129 / Biotype gravis).